Here is a 413-residue protein sequence, read N- to C-terminus: Snake venom metalloproteinase AaPA (413 aa).

The first 20 residues, 1–20 (MIQVLLVTICLAAFPYQGSS), serve as a signal peptide directing secretion. The propeptide occupies 21–189 (IILESGKVND…KKASQLIVST (169 aa)). Residues 193–390 (RYMEIVIVVD…ENPPCILNKP (198 aa)) enclose the Peptidase M12B domain. Glu-196 and Asp-280 together coordinate Ca(2+). Intrachain disulfides connect Cys-304-Cys-385, Cys-344-Cys-369, and Cys-346-Cys-352. His-329 serves as a coordination point for Zn(2+). Residue Glu-330 is part of the active site. The Zn(2+) site is built by His-333 and His-339. Residues Cys-385, Asn-388, Val-400, Asn-403, Leu-405, Glu-407, and Asp-413 each coordinate Ca(2+). The propeptide occupies 391–413 (LRTDTVSTPVSGNELLEAEKDYD).

It belongs to the venom metalloproteinase (M12B) family. P-I subfamily. Monomer. The cofactor is Zn(2+). Expressed by the venom gland.

The protein localises to the secreted. Functionally, snake venom zinc metalloprotease that may activate prothrombin. The chain is Snake venom metalloproteinase AaPA from Deinagkistrodon acutus (Hundred-pace snake).